The sequence spans 446 residues: 6-methylsalicylate 1-monooxygenase atA (446 aa).

A helical transmembrane segment spans residues 7–27; it reads VSVAIIGGGIGGLSLAIGLLQ. 2 residues coordinate FAD: Glu-37 and Ala-50. An N-linked (GlcNAc...) asparagine glycan is attached at Asn-107. Arg-116 serves as a coordination point for FAD. Residue Arg-200 is part of the active site. FAD-binding residues include Asp-311 and Ala-324.

The protein belongs to the paxM FAD-dependent monooxygenase family. It depends on FAD as a cofactor.

The protein resides in the membrane. The catalysed reaction is 6-methylsalicylate + AH2 + O2 + H(+) = 3-methylcatechol + A + CO2 + H2O. Its pathway is secondary metabolite biosynthesis. Its function is as follows. 6-methylsalicylate 1-monooxygenase; part of the gene cluster that mediates the biosynthesis of terreic acid, a quinone epoxide inhibitor of Bruton's tyrosine kinase. The first step of the pathway is the synthesis of 6-methylsalicylic acid (6-MSA) by the 6-methylsalicylic acid synthase atX. In the biosynthesis of 6-MSA, atX utilizes one acetyl-CoA and three malonyl-CoAs as its substrates and catalyzes a series of programmed reactions including Claisen condensation, reduction, aldol cyclization, and the hydrolytic cleavage that yields 6-MSA. The 6-methylsalicylate 1-monooxygenase atA then catalyzes the decarboxylative hydroxylation of 6-MSA to 3-methylcatechol. The next step is the conversion of 3-methylcatechol to 3-methyl-1,2,4-benzenetriol by cytochrome P450 monooxygenase atE, which is enhanced by cytochrome P450 monooxygenase atG. Then, the epoxidase atD catalyzes the epoxidation and hydroxyl oxidation of 3-methyl-1,2,4-benzenetriol to terremutin. Lastly, GMC oxidoreductase atC oxidizes terremutin to terreic acid. In Aspergillus terreus (strain NIH 2624 / FGSC A1156), this protein is 6-methylsalicylate 1-monooxygenase atA.